Reading from the N-terminus, the 642-residue chain is Threonine--tRNA ligase (642 aa).

In terms of domain architecture, TGS spans 1-61 (MPVITLPDGS…ENDAQLSIIT (61 aa)). Residues 243-534 (DHRKIGKQLD…LTEEFAGFFP (292 aa)) are catalytic. K286 carries the post-translational modification N6-acetyllysine. Residues C334, H385, and H511 each coordinate Zn(2+).

It belongs to the class-II aminoacyl-tRNA synthetase family. As to quaternary structure, homodimer. It depends on Zn(2+) as a cofactor.

It is found in the cytoplasm. The catalysed reaction is tRNA(Thr) + L-threonine + ATP = L-threonyl-tRNA(Thr) + AMP + diphosphate + H(+). In terms of biological role, catalyzes the attachment of threonine to tRNA(Thr) in a two-step reaction: L-threonine is first activated by ATP to form Thr-AMP and then transferred to the acceptor end of tRNA(Thr). Also edits incorrectly charged L-seryl-tRNA(Thr). The polypeptide is Threonine--tRNA ligase (Shigella boydii serotype 18 (strain CDC 3083-94 / BS512)).